Here is a 341-residue protein sequence, read N- to C-terminus: Protein DOWNY MILDEW RESISTANCE 6 (341 aa).

The region spanning 188–288 (QGQHMAVNYY…RLSVASFLCP (101 aa)) is the Fe2OG dioxygenase domain. Residues histidine 212, aspartate 214, and histidine 269 each coordinate Fe cation. Arginine 279 lines the 2-oxoglutarate pocket.

The protein belongs to the iron/ascorbate-dependent oxidoreductase family. It depends on Fe(2+) as a cofactor.

It carries out the reaction salicylate + NADH + O2 + H(+) = 2,3-dihydroxybenzoate + NAD(+) + H2O. Its function is as follows. Converts salicylic acid (SA) to 2,3-dihydroxybenzoic acid (2,3-DHBA). Suppressor of immunity. Regulates negatively defense associated genes expression (e.g. PR-1, PR-2, and PR-5). Negative regulator of defense against Hyaloperonospora arabidopsidis. (Microbial infection) Required for susceptibility to the downy mildew pathogen Hyaloperonospora arabidopsidis. In terms of biological role, (Microbial infection) Required for susceptibility to Pseudomonas syringae pv. tomato DC3000. Functionally, (Microbial infection) Required for susceptibility to the oomycete Phytophthora capsici. This chain is Protein DOWNY MILDEW RESISTANCE 6, found in Arabidopsis thaliana (Mouse-ear cress).